The primary structure comprises 218 residues: dTTP/UTP pyrophosphatase (218 aa).

Positions 1–10 (MTASPSSAEG) are enriched in polar residues. The segment at 1-20 (MTASPSSAEGSSGLPDRPKL) is disordered. Residue aspartate 87 is the Proton acceptor of the active site.

The protein belongs to the Maf family. YhdE subfamily. A divalent metal cation is required as a cofactor.

It is found in the cytoplasm. It carries out the reaction dTTP + H2O = dTMP + diphosphate + H(+). It catalyses the reaction UTP + H2O = UMP + diphosphate + H(+). In terms of biological role, nucleoside triphosphate pyrophosphatase that hydrolyzes dTTP and UTP. May have a dual role in cell division arrest and in preventing the incorporation of modified nucleotides into cellular nucleic acids. The chain is dTTP/UTP pyrophosphatase from Gluconobacter oxydans (strain 621H) (Gluconobacter suboxydans).